A 140-amino-acid polypeptide reads, in one-letter code: UPF0251 protein Athe_2281 (140 aa).

It belongs to the UPF0251 family.

This is UPF0251 protein Athe_2281 from Caldicellulosiruptor bescii (strain ATCC BAA-1888 / DSM 6725 / KCTC 15123 / Z-1320) (Anaerocellum thermophilum).